The sequence spans 578 residues: Zinc finger protein with KRAB and SCAN domains 8 (578 aa).

The disordered stretch occupies residues 1–20 (MAEESRKPSAPSPPDQTPEE). Ser-12 bears the Phosphoserine mark. Residue Lys-26 forms a Glycyl lysine isopeptide (Lys-Gly) (interchain with G-Cter in SUMO2) linkage. Positions 51–133 (RLRFRQLCYQ…TLLEDLERQI (83 aa)) constitute an SCAN box domain. Residues 158 to 205 (ASAPEPPNTQLQSEATQHKSPVPQESQERSMSTSQSPTRSQKGSSGDQ) form a disordered region. Positions 165 to 205 (NTQLQSEATQHKSPVPQESQERSMSTSQSPTRSQKGSSGDQ) are enriched in polar residues. Residues Lys-176 and Lys-199 each participate in a glycyl lysine isopeptide (Lys-Gly) (interchain with G-Cter in SUMO2) cross-link. Position 201 is a phosphoserine (Ser-201). The 97-residue stretch at 220–316 (EKIEDMAVSL…GRLERQRGNP (97 aa)) folds into the KRAB domain. Glycyl lysine isopeptide (Lys-Gly) (interchain with G-Cter in SUMO2) cross-links involve residues Lys-221, Lys-272, and Lys-288. 2 C2H2-type zinc fingers span residues 322 to 344 (HKCD…WRIH) and 350 to 372 (YQCN…QDIH). Glycyl lysine isopeptide (Lys-Gly) (interchain with G-Cter in SUMO2) cross-links involve residues Lys-374 and Lys-376. 7 consecutive C2H2-type zinc fingers follow at residues 378 to 400 (YHCK…QRIH), 406 to 428 (YQCN…QRIH), 434 to 456 (YECN…QRIH), 462 to 484 (YECD…QRSH), 490 to 512 (YKCN…QRIH), 518 to 540 (YKCK…LRIH), and 546 to 568 (YQCN…QRIH). Residues Lys-413 and Lys-441 each participate in a glycyl lysine isopeptide (Lys-Gly) (interchain with G-Cter in SUMO2) cross-link. Residue Lys-502 forms a Glycyl lysine isopeptide (Lys-Gly) (interchain with G-Cter in SUMO2) linkage. Lys-572 participates in a covalent cross-link: Glycyl lysine isopeptide (Lys-Gly) (interchain with G-Cter in SUMO2).

Belongs to the krueppel C2H2-type zinc-finger protein family.

It is found in the nucleus. Its function is as follows. May be involved in transcriptional regulation. The polypeptide is Zinc finger protein with KRAB and SCAN domains 8 (ZKSCAN8) (Pan paniscus (Pygmy chimpanzee)).